A 69-amino-acid polypeptide reads, in one-letter code: MIFKVFYQETLTETPVREKTQSLYVEAESEVKVRQLLKDEPFHIEFVEKISDAHLAYEKENPDFALWEK.

The protein belongs to the RNA polymerase subunit epsilon family. In terms of assembly, RNAP is composed of a core of 2 alpha, a beta and a beta' subunit. The core is associated with a delta subunit, and at least one of epsilon or omega. When a sigma factor is associated with the core the holoenzyme is formed, which can initiate transcription.

It carries out the reaction RNA(n) + a ribonucleoside 5'-triphosphate = RNA(n+1) + diphosphate. Functionally, a non-essential component of RNA polymerase (RNAP). The sequence is that of DNA-directed RNA polymerase subunit epsilon from Listeria monocytogenes serotype 4b (strain CLIP80459).